A 239-amino-acid chain; its full sequence is Phosphoadenosine 5'-phosphosulfate reductase (239 aa).

Cys-235 functions as the Nucleophile; cysteine thiosulfonate intermediate in the catalytic mechanism.

Belongs to the PAPS reductase family. CysH subfamily.

The protein resides in the cytoplasm. It catalyses the reaction [thioredoxin]-disulfide + sulfite + adenosine 3',5'-bisphosphate + 2 H(+) = [thioredoxin]-dithiol + 3'-phosphoadenylyl sulfate. The protein operates within sulfur metabolism; hydrogen sulfide biosynthesis; sulfite from sulfate: step 3/3. Catalyzes the formation of sulfite from phosphoadenosine 5'-phosphosulfate (PAPS) using thioredoxin as an electron donor. This chain is Phosphoadenosine 5'-phosphosulfate reductase, found in Thiocapsa roseopersicina.